A 147-amino-acid chain; its full sequence is Prefoldin subunit alpha (147 aa).

This sequence belongs to the prefoldin alpha subunit family. As to quaternary structure, heterohexamer of two alpha and four beta subunits.

Its subcellular location is the cytoplasm. Its function is as follows. Molecular chaperone capable of stabilizing a range of proteins. Seems to fulfill an ATP-independent, HSP70-like function in archaeal de novo protein folding. This is Prefoldin subunit alpha from Methanocorpusculum labreanum (strain ATCC 43576 / DSM 4855 / Z).